We begin with the raw amino-acid sequence, 461 residues long: GTPase Der (461 aa).

EngA-type G domains follow at residues 3-167 and 190-371; these read PQVI…GEKQ and LKLA…AAWS. GTP-binding positions include 9–16, 56–60, 119–122, 196–203, 249–253, and 314–317; these read GRPNVGKS, DTAGW, NKAE, GRPNAGKS, DTAGM, and NKWD. The KH-like domain occupies 372 to 456; the sequence is KRVPTAALNR…PIRLTLRSPK (85 aa).

It belongs to the TRAFAC class TrmE-Era-EngA-EngB-Septin-like GTPase superfamily. EngA (Der) GTPase family. As to quaternary structure, associates with the 50S ribosomal subunit.

Functionally, GTPase that plays an essential role in the late steps of ribosome biogenesis. The sequence is that of GTPase Der from Novosphingobium aromaticivorans (strain ATCC 700278 / DSM 12444 / CCUG 56034 / CIP 105152 / NBRC 16084 / F199).